A 198-amino-acid polypeptide reads, in one-letter code: Glycerol-3-phosphate acyltransferase (198 aa).

Transmembrane regions (helical) follow at residues tyrosine 2–leucine 22, leucine 48–isoleucine 70, methionine 75–leucine 97, valine 111–isoleucine 131, and isoleucine 154–phenylalanine 174.

This sequence belongs to the PlsY family. In terms of assembly, probably interacts with PlsX.

It localises to the cell membrane. The catalysed reaction is an acyl phosphate + sn-glycerol 3-phosphate = a 1-acyl-sn-glycero-3-phosphate + phosphate. It functions in the pathway lipid metabolism; phospholipid metabolism. Catalyzes the transfer of an acyl group from acyl-phosphate (acyl-PO(4)) to glycerol-3-phosphate (G3P) to form lysophosphatidic acid (LPA). This enzyme utilizes acyl-phosphate as fatty acyl donor, but not acyl-CoA or acyl-ACP. The chain is Glycerol-3-phosphate acyltransferase from Thermoanaerobacter pseudethanolicus (strain ATCC 33223 / 39E) (Clostridium thermohydrosulfuricum).